A 491-amino-acid polypeptide reads, in one-letter code: UDP-N-acetylmuramate--L-alanine ligase (491 aa).

126 to 132 (GTHGKTT) serves as a coordination point for ATP.

This sequence belongs to the MurCDEF family.

Its subcellular location is the cytoplasm. It carries out the reaction UDP-N-acetyl-alpha-D-muramate + L-alanine + ATP = UDP-N-acetyl-alpha-D-muramoyl-L-alanine + ADP + phosphate + H(+). Its pathway is cell wall biogenesis; peptidoglycan biosynthesis. In terms of biological role, cell wall formation. The sequence is that of UDP-N-acetylmuramate--L-alanine ligase from Klebsiella pneumoniae subsp. pneumoniae (strain ATCC 700721 / MGH 78578).